Consider the following 146-residue polypeptide: Large ribosomal subunit protein uL15 (146 aa).

Residues 1-10 (MTIKLHDLKP) show a composition bias toward basic and acidic residues. Residues 1–52 (MTIKLHDLKPARGSKTPRTRVGRGEGSKGKTAGRGTKGTKARKNVPVTFEGG) are disordered.

Belongs to the universal ribosomal protein uL15 family. Part of the 50S ribosomal subunit.

Binds to the 23S rRNA. The chain is Large ribosomal subunit protein uL15 from Mycolicibacterium paratuberculosis (strain ATCC BAA-968 / K-10) (Mycobacterium paratuberculosis).